Here is a 761-residue protein sequence, read N- to C-terminus: Neurotrypsin (761 aa).

An N-terminal signal peptide occupies residues methionine 1–alanine 21. Positions serine 25–alanine 87 are disordered. Residues arginine 38–serine 48 show a composition bias toward low complexity. The 73-residue stretch at cysteine 85–cysteine 157 folds into the Kringle domain. 17 disulfides stabilise this stretch: cysteine 85–cysteine 157, cysteine 101–cysteine 141, cysteine 130–cysteine 155, cysteine 191–cysteine 255, cysteine 204–cysteine 265, cysteine 235–cysteine 245, cysteine 298–cysteine 361, cysteine 311–cysteine 371, cysteine 341–cysteine 351, cysteine 411–cysteine 475, cysteine 424–cysteine 485, cysteine 455–cysteine 465, cysteine 505–cysteine 636, cysteine 547–cysteine 563, cysteine 651–cysteine 717, cysteine 680–cysteine 694, and cysteine 707–cysteine 736. Asparagine 93 is a glycosylation site (N-linked (GlcNAc...) asparagine). 3 consecutive SRCR domains span residues isoleucine 166–proline 267, isoleucine 273–proline 373, and isoleucine 386–tyrosine 487. The tract at residues cysteine 505–arginine 516 is zymogen activation region. One can recognise a Peptidase S1 domain in the interval isoleucine 517–serine 760. N-linked (GlcNAc...) asparagine glycosylation occurs at asparagine 521. The active-site Charge relay system is histidine 562. Residue asparagine 569 is glycosylated (N-linked (GlcNAc...) asparagine). Aspartate 612 functions as the Charge relay system in the catalytic mechanism. Residue serine 711 is the Charge relay system of the active site.

It belongs to the peptidase S1 family. In terms of tissue distribution, most abundant in cerebral cortex, hippocampus and amygdala.

Its subcellular location is the secreted. In terms of biological role, plays a role in neuronal plasticity and the proteolytic action may subserve structural reorganizations associated with learning and memory operations. In Mus musculus (Mouse), this protein is Neurotrypsin (Prss12).